Consider the following 193-residue polypeptide: p53 apoptosis effector related to PMP-22 (193 aa).

A run of 4 helical transmembrane segments spans residues 12–32 (RWIL…ALAG), 81–101 (LFCG…ALCG), 110–130 (VIGG…VIYP), and 151–171 (WAYG…FFFC).

This sequence belongs to the TMEM47 family. In terms of tissue distribution, expressed in the stratified squamous skin epithelium of the skin and the tongue, but not in simple epithelia (at protein level). Expressed in the oral epithelium, tongue epithelium and skin (at protein level). More abundant in areas of lower flow stress in the inner curvature compared to the outer curvature regions of the aorta (at protein level). Expressed in luminal cells and myoepithelium cells of the mammary epithelium (at protein level). Expression increases during the early stages of pregnancy before decreasing before birth, expression continues to be weak during involution which mirrors decreased desmosome abundance and organization at these time points (at protein level). Expressed by epithelial cells at the mucosal surface in the proximal colon (at protein level). Expressed in apoptotic cells.

It localises to the cell junction. It is found in the desmosome. The protein localises to the cell membrane. Its subcellular location is the cytoplasm. Component of intercellular desmosome junctions. Plays a role in stratified epithelial integrity and cell-cell adhesion by promoting desmosome assembly. Thereby plays a role in barrier function of the skin against infection. Plays a role in mammary epithelial tissue homeostasis and remodeling during and after pregnancy, potentially via its involvement in desmosome cell-cell junctions. Required for tooth enamel development via facilitating desmosome-mediated ameloblast adhesion to the stratum intermedium during the transitional stage of amelogenesis. May also play a role in downstream transcriptional regulation of other genes involved in amelogenesis such as AMBN, ENAM, MMP20 and KLK4. Plays a role as an effector in the TP53-dependent apoptotic pathway. Positively regulates apoptosis in T-helper 17 (Th17) cell populations via caspase-dependent signaling. Promotes neutrophil transepithelial migration in response to chemoattractants such as hepoxilin A3 (HXA3), N-Formylmethionyl-leucyl-phenylalanine (fMLP) and CXCL8/IL-8. May act as a positive regulator of endothelial cell apoptosis in response to blood flow-derived shear stress. The polypeptide is p53 apoptosis effector related to PMP-22 (Mus musculus (Mouse)).